The primary structure comprises 565 residues: Glycine/sarcosine/dimethylglycine N-methyltransferase (565 aa).

The span at 1–10 shows a compositional bias: basic and acidic residues; that stretch reads MTKSVDDLAR. The disordered stretch occupies residues 1 to 34; sequence MTKSVDDLARGDQAGDEQDPVHREQQTFGDNPLE. Residues Y45, W53, R62, A86, D107, 134 to 135, and L152 each bind S-adenosyl-L-methionine; that span reads DW. The substrate site is built by N154, R187, and Y226.

It belongs to the class I-like SAM-binding methyltransferase superfamily. Glycine N-methyltransferase family. Monomer.

The enzyme catalyses glycine + 2 S-adenosyl-L-methionine = N,N-dimethylglycine + 2 S-adenosyl-L-homocysteine + 2 H(+). It carries out the reaction sarcosine + 2 S-adenosyl-L-methionine = glycine betaine + 2 S-adenosyl-L-homocysteine + 2 H(+). The catalysed reaction is glycine + S-adenosyl-L-methionine = sarcosine + S-adenosyl-L-homocysteine + H(+). It catalyses the reaction sarcosine + S-adenosyl-L-methionine = N,N-dimethylglycine + S-adenosyl-L-homocysteine + H(+). The enzyme catalyses N,N-dimethylglycine + S-adenosyl-L-methionine = glycine betaine + S-adenosyl-L-homocysteine + H(+). The protein operates within amine and polyamine biosynthesis; betaine biosynthesis via glycine pathway; betaine from glycine: step 1/3. It participates in amine and polyamine biosynthesis; betaine biosynthesis via glycine pathway; betaine from glycine: step 2/3. Its pathway is amine and polyamine biosynthesis; betaine biosynthesis via glycine pathway; betaine from glycine: step 3/3. In terms of biological role, catalyzes the methylation of glycine, sarcosine and dimethylglycine to sarcosine, dimethylglycine and betaine, respectively, with S-adenosylmethionine (AdoMet) acting as the methyl donor. Shows low level of activity on glycine when expressed in E.coli. This chain is Glycine/sarcosine/dimethylglycine N-methyltransferase, found in Actinopolyspora halophila.